A 247-amino-acid chain; its full sequence is 3-deoxy-manno-octulosonate cytidylyltransferase (247 aa).

This sequence belongs to the KdsB family.

Its subcellular location is the cytoplasm. It carries out the reaction 3-deoxy-alpha-D-manno-oct-2-ulosonate + CTP = CMP-3-deoxy-beta-D-manno-octulosonate + diphosphate. It functions in the pathway nucleotide-sugar biosynthesis; CMP-3-deoxy-D-manno-octulosonate biosynthesis; CMP-3-deoxy-D-manno-octulosonate from 3-deoxy-D-manno-octulosonate and CTP: step 1/1. Its pathway is bacterial outer membrane biogenesis; lipopolysaccharide biosynthesis. Activates KDO (a required 8-carbon sugar) for incorporation into bacterial lipopolysaccharide in Gram-negative bacteria. This chain is 3-deoxy-manno-octulosonate cytidylyltransferase, found in Methylobacterium radiotolerans (strain ATCC 27329 / DSM 1819 / JCM 2831 / NBRC 15690 / NCIMB 10815 / 0-1).